The sequence spans 271 residues: Enolase-phosphatase E1 (271 aa).

The Mg(2+) site is built by Asp-18 and Glu-20. Residues Ser-144–Ser-145 and Lys-194 contribute to the substrate site. Asp-221 lines the Mg(2+) pocket.

Belongs to the HAD-like hydrolase superfamily. MasA/MtnC family. Monomer. Mg(2+) is required as a cofactor.

The protein localises to the cytoplasm. Its subcellular location is the nucleus. The catalysed reaction is 5-methylsulfanyl-2,3-dioxopentyl phosphate + H2O = 1,2-dihydroxy-5-(methylsulfanyl)pent-1-en-3-one + phosphate. It functions in the pathway amino-acid biosynthesis; L-methionine biosynthesis via salvage pathway; L-methionine from S-methyl-5-thio-alpha-D-ribose 1-phosphate: step 3/6. Its pathway is amino-acid biosynthesis; L-methionine biosynthesis via salvage pathway; L-methionine from S-methyl-5-thio-alpha-D-ribose 1-phosphate: step 4/6. Bifunctional enzyme that catalyzes the enolization of 2,3-diketo-5-methylthiopentyl-1-phosphate (DK-MTP-1-P) into the intermediate 2-hydroxy-3-keto-5-methylthiopentenyl-1-phosphate (HK-MTPenyl-1-P), which is then dephosphorylated to form the acireductone 1,2-dihydroxy-3-keto-5-methylthiopentene (DHK-MTPene). The polypeptide is Enolase-phosphatase E1 (Candida albicans (strain WO-1) (Yeast)).